A 330-amino-acid polypeptide reads, in one-letter code: Syntaxin-121 (330 aa).

Residues 1–10 show a composition bias toward polar residues; sequence MNNLFSSSWK. The interval 1 to 39 is disordered; the sequence is MNNLFSSSWKRTGGGGGGDGDIESGGGVEMAPPPGAAAG. Residues 1-284 are Cytoplasmic-facing; it reads MNNLFSSSWK…RKHQKSTRKW (284 aa). Positions 12-28 are enriched in gly residues; that stretch reads TGGGGGGDGDIESGGGV. Positions 212-274 constitute a t-SNARE coiled-coil homology domain; that stretch reads VAEIQERHGA…DRGREQLVVA (63 aa). A helical; Anchor for type IV membrane protein transmembrane segment spans residues 285 to 305; sequence TCIAIIILLVLILVVVLPIVL. Residues 306–330 are Vesicular-facing; the sequence is KFVNNNKSSSSSPAPATPSPPPPTA. Residues 311–330 form a disordered region; it reads NKSSSSSPAPATPSPPPPTA. A compositionally biased stretch (pro residues) spans 320–330; it reads PATPSPPPPTA.

It belongs to the syntaxin family. In terms of assembly, interacts with SNAP32. Expressed in roots, stems, leaf blades and leaf sheaths.

It localises to the cell membrane. Vesicle trafficking protein that functions in the secretory pathway. Involved in plant defense by mediating host resistance to the rice blast fungus Magnaporthe oryzae. The interaction with SNAP32 may contribute to host resistance to the rice blast fungus. This is Syntaxin-121 from Oryza sativa subsp. japonica (Rice).